A 637-amino-acid chain; its full sequence is Chaperone protein HtpG (637 aa).

Residues 1–345 (MSQQETHGFQ…SNDLPLNVSR (345 aa)) form an a; substrate-binding region. The b stretch occupies residues 346-562 (EILQDNQVTT…EGEMSTQMIK (217 aa)). Residues 563 to 637 (LMQAAGQPVP…TNQMLLASVK (75 aa)) form a c region.

It belongs to the heat shock protein 90 family. In terms of assembly, homodimer.

Its subcellular location is the cytoplasm. Molecular chaperone. Has ATPase activity. In Shewanella frigidimarina (strain NCIMB 400), this protein is Chaperone protein HtpG.